A 309-amino-acid polypeptide reads, in one-letter code: Olfactory receptor 2G3 (309 aa).

Residues 1–25 lie on the Extracellular side of the membrane; sequence MGLGNESSLMDFILLGFSDHPRLEA. Residue N5 is glycosylated (N-linked (GlcNAc...) asparagine). Residues 26 to 49 traverse the membrane as a helical segment; sequence VLFVFVLFFYLLTLVGNFTIIIIS. The Cytoplasmic portion of the chain corresponds to 50–57; sequence YLDPPLHT. A helical transmembrane segment spans residues 58–79; it reads PMYFFLSNLSLLDICFTTSLAP. Residues 80-100 are Extracellular-facing; that stretch reads QTLVNLQRPKKTITYGGCVAQ. A disulfide bridge connects residues C97 and C189. A helical transmembrane segment spans residues 101–120; the sequence is LYISLALGSTECILLADMAL. Over 121-139 the chain is Cytoplasmic; it reads DRYIAVCKPLHYVVIMNPR. Residues 140–158 form a helical membrane-spanning segment; the sequence is LCQQLASISWLSGLASSLI. Over 159–195 the chain is Extracellular; sequence HATFTLQLPLCGNHRLDHFICEVPALLKLACVDTTVN. A helical transmembrane segment spans residues 196-219; that stretch reads ELVLFVVSVLFVVIPPALISISYG. Topologically, residues 220–236 are cytoplasmic; sequence FITQAVLRIKSVEARHK. Residues 237 to 259 traverse the membrane as a helical segment; it reads AFSTCSSHLTVVIIFYGTIIYVY. Topologically, residues 260-272 are extracellular; sequence LQPSDSYAQDQGK. Residues 273–292 form a helical membrane-spanning segment; that stretch reads FISLFYTMVTPTLNPIIYTL. The Cytoplasmic portion of the chain corresponds to 293–309; the sequence is RNKDMKEALRKLLSGKL.

Belongs to the G-protein coupled receptor 1 family.

The protein resides in the cell membrane. Odorant receptor. The sequence is that of Olfactory receptor 2G3 (OR2G3) from Homo sapiens (Human).